We begin with the raw amino-acid sequence, 140 residues long: Small ribosomal subunit protein uS19 (140 aa).

It belongs to the universal ribosomal protein uS19 family.

Functionally, protein S19 forms a complex with S13 that binds strongly to the 16S ribosomal RNA. The chain is Small ribosomal subunit protein uS19 from Metallosphaera sedula (strain ATCC 51363 / DSM 5348 / JCM 9185 / NBRC 15509 / TH2).